A 113-amino-acid polypeptide reads, in one-letter code: Iron-sulfur cluster insertion protein ErpA (113 aa).

Positions 41, 105, and 107 each coordinate iron-sulfur cluster.

The protein belongs to the HesB/IscA family. Homodimer. The cofactor is iron-sulfur cluster.

Required for insertion of 4Fe-4S clusters for at least IspG. This is Iron-sulfur cluster insertion protein ErpA from Hydrogenovibrio crunogenus (strain DSM 25203 / XCL-2) (Thiomicrospira crunogena).